The primary structure comprises 173 residues: Shikimate kinase (173 aa).

ATP is bound at residue 12–17 (GSGKTT). Threonine 16 lines the Mg(2+) pocket. Substrate-binding residues include aspartate 34, arginine 58, and glycine 80. Position 118 (arginine 118) interacts with ATP. Arginine 136 is a substrate binding site.

The protein belongs to the shikimate kinase family. As to quaternary structure, monomer. It depends on Mg(2+) as a cofactor.

The protein localises to the cytoplasm. The enzyme catalyses shikimate + ATP = 3-phosphoshikimate + ADP + H(+). Its pathway is metabolic intermediate biosynthesis; chorismate biosynthesis; chorismate from D-erythrose 4-phosphate and phosphoenolpyruvate: step 5/7. In terms of biological role, catalyzes the specific phosphorylation of the 3-hydroxyl group of shikimic acid using ATP as a cosubstrate. In Moorella thermoacetica (strain ATCC 39073 / JCM 9320), this protein is Shikimate kinase.